A 121-amino-acid chain; its full sequence is Large ribosomal subunit protein bL12 (121 aa).

The protein belongs to the bacterial ribosomal protein bL12 family. As to quaternary structure, homodimer. Part of the ribosomal stalk of the 50S ribosomal subunit. Forms a multimeric L10(L12)X complex, where L10 forms an elongated spine to which 2 to 4 L12 dimers bind in a sequential fashion. Binds GTP-bound translation factors.

In terms of biological role, forms part of the ribosomal stalk which helps the ribosome interact with GTP-bound translation factors. Is thus essential for accurate translation. The sequence is that of Large ribosomal subunit protein bL12 from Shewanella baltica (strain OS223).